The primary structure comprises 1858 residues: Inactive histone-lysine N-methyltransferase 2E (1858 aa).

The HCFC1-binding motif (HBM) signature appears at 63–66 (DHNY). Residues 118–166 (VTRCICGFTHDDGYMICCDKCSVWQHIDCMGIDRQHIPDTYLCERCQPR) form a PHD-type zinc finger. Positions 121, 123, 135, 138, 143, 146, 160, and 163 each coordinate Zn(2+). The disordered stretch occupies residues 217 to 269 (ASRVSKVNDKRRKKSGEKEQHISKCKKAFREGSRKSSRVKGSAPEIDPSSDGS). Basic and acidic residues predominate over residues 232-250 (GEKEQHISKCKKAFREGSR). Residues 330 to 447 (PPVESHIQKN…KGTEITIAFD (118 aa)) form the SET domain. Ser-435 carries O-linked (GlcNAc) serine glycosylation. Residue Thr-440 is glycosylated (O-linked (GlcNAc) threonine). Positions 475 to 530 (SESMENINSGYETRRKKGKKDKDISKEKDTQNQNITLDCEGTTNKMKSPETKQRKL) are disordered. The segment covering 494–504 (KDKDISKEKDT) has biased composition (basic and acidic residues). Polar residues predominate over residues 505–520 (QNQNITLDCEGTTNKM). Residues 559-615 (VEMESEEQIAERKRKMTREERKMEAILQAFARLEKREKRREQALERISTAKTEVKTE) are a coiled coil. Position 623 is a phosphoserine (Ser-623). The segment at 630–687 (EQAKEENASKPTPAKVNRTKQRKSFSRSRTHIGQQRRRHRTVSMCSDIQPSSPDIEVT) is disordered. Over residues 646-670 (NRTKQRKSFSRSRTHIGQQRRRHRT) the composition is skewed to basic residues. Polar residues predominate over residues 672–687 (SMCSDIQPSSPDIEVT). 2 positions are modified to phosphoserine: Ser-837 and Ser-845. Low complexity-rich tracts occupy residues 887–901 (TSTPTPSPYATPTHT) and 933–957 (PVTPVTPGTPGNTMHFENISSPESS). Disordered stretches follow at residues 887–960 (TSTP…SPEI) and 1039–1068 (LETPAHDRAEPNSQLDSTHSGRGTMYSSWV). Over residues 1039–1048 (LETPAHDRAE) the composition is skewed to basic and acidic residues. Residues 1049 to 1068 (PNSQLDSTHSGRGTMYSSWV) show a composition bias toward polar residues. Phosphoserine is present on Ser-1070. Disordered regions lie at residues 1164-1561 (KRQR…QNQQ) and 1581-1835 (VFTS…PVPG). Composition is skewed to polar residues over residues 1186-1206 (PHASGSLSNNGDGCASSNDNG) and 1222-1235 (TVYNATSEETSNNC). Ser-1273 carries the post-translational modification Phosphoserine. Residues 1273 to 1282 (SDHRKDKDSG) are compositionally biased toward basic and acidic residues. Low complexity-rich tracts occupy residues 1285–1303 (SPCVSCSPSHVQSSPSSHS) and 1349–1362 (KSPPKMSKPGSPGS). A Phosphoserine modification is found at Ser-1359. 2 stretches are compositionally biased toward polar residues: residues 1400–1432 (QQKQLSNNNQALSKNHPPQTHVRNSSEQLSQKL) and 1506–1542 (LPANTQQATSGTLFTQTPSGQSSATYSQFNQQSLNST). Residues 1543 to 1553 (APPPPPPPPPS) are compositionally biased toward pro residues. The span at 1581-1599 (VFTSGPNQALPGTTSQQTV) shows a compositional bias: polar residues. Positions 1626–1637 (VPPPPPPPPAPG) are enriched in pro residues. The segment covering 1642–1651 (QQPNSHQQHS) has biased composition (polar residues). The segment covering 1677–1687 (LPPPPPPPGPA) has biased composition (pro residues). Over residues 1698-1711 (TGLQGLQAQHQHVV) the composition is skewed to polar residues. The span at 1714–1724 (APPPPPPPPPS) shows a compositional bias: pro residues. Over residues 1798–1808 (QGPNSIPTPTA) the composition is skewed to polar residues.

It belongs to the class V-like SAM-binding methyltransferase superfamily. Histone-lysine methyltransferase family. TRX/MLL subfamily. In terms of assembly, component of a complex composed of KMT2E (isoform 3), OGT and USP7; the complex stabilizes KMT2E, preventing KMT2E ubiquitination and proteasomal-mediated degradation. Isoform 3 interacts (via N-terminus) with OGT (via TRP repeats). Isoform 3 interacts with deubiquitinating enzyme USP7 (via MATH domain). Isoform 3 interacts (via HBM motif) with HCFC1 (via Kelch domain). Isoform 3 interacts with E2F1; the interaction is probably indirect and is mediated via HCFC1. Post-translationally, ubiquitinated. Deubiquitinated by USP7. O-glycosylated at Ser-435 and Thr-440 in the SET domain by OGT which probably prevents KMT2E proteasomal-mediated degradation. Widely expressed in both adult and fetal tissues. Highest levels of expression observed in fetal thymus and kidney and in adult hematopoietic tissues, jejunum and cerebellum. Isoform NKp44L: Not detected on circulating cells from healthy individuals, but is expressed on a large panel of tumor and transformed cells.

It is found in the chromosome. The protein localises to the cytoplasm. The protein resides in the cytoskeleton. It localises to the microtubule organizing center. Its subcellular location is the centrosome. It is found in the nucleus speckle. The protein localises to the nucleus. The protein resides in the nucleoplasm. It localises to the cell membrane. Associates with chromatin regions downstream of transcriptional start sites of active genes and thus regulates gene transcription. Chromatin interaction is mediated via the binding to tri-methylated histone H3 at 'Lys-4' (H3K4me3). Key regulator of hematopoiesis involved in terminal myeloid differentiation and in the regulation of hematopoietic stem cell (HSCs) self-renewal by a mechanism that involves DNA methylation. Also acts as an important cell cycle regulator, participating in cell cycle regulatory network machinery at multiple cell cycle stages including G1/S transition, S phase progression and mitotic entry. Recruited to E2F1 responsive promoters by HCFC1 where it stimulates tri-methylation of histone H3 at 'Lys-4' and transcriptional activation and thereby facilitates G1 to S phase transition. During myoblast differentiation, required to suppress inappropriate expression of S-phase-promoting genes and maintain expression of determination genes in quiescent cells. Its function is as follows. Cellular ligand for NCR2/NKp44, may play a role as a danger signal in cytotoxicity and NK-cell-mediated innate immunity. The chain is Inactive histone-lysine N-methyltransferase 2E (KMT2E) from Homo sapiens (Human).